The sequence spans 75 residues: MKPDIHPDYQEITVTCSCGSTFQTRSTMGKPLHIEVCSVCHPFYTGKQKIVDTAGRVEKFRQKYGKKVEKQPAAG.

Zn(2+)-binding residues include C16, C18, C37, and C40.

It belongs to the bacterial ribosomal protein bL31 family. Type A subfamily. In terms of assembly, part of the 50S ribosomal subunit. Zn(2+) serves as cofactor.

In terms of biological role, binds the 23S rRNA. This is Large ribosomal subunit protein bL31 from Nitrosospira multiformis (strain ATCC 25196 / NCIMB 11849 / C 71).